Reading from the N-terminus, the 115-residue chain is Thiosulfate:glutathione sulfurtransferase (115 aa).

One can recognise a Rhodanese domain in the interval 17-115 (ASGRARLFDV…AYREWLEKES (99 aa)). The Cysteine persulfide intermediate role is filled by C79.

Highly expressed in kidney, liver and skeletal muscle. Lower levels of expression in heart, colon, thymus, spleen, placenta and lung. Weakly expressed in brain, small intestine and peripheral blood leukocytes. Expressed at high levels in the breast carcinoma cell lines MCF-7 and MDA-MB-468 and at a lower level in the breast carcinoma cell line MDA-MB-231, the colon carcinoma call line LoVo and the lung carcinoma cell line A-549. No expression in the cell lines EFO-27 and HeLa, or the normal breast tissue cell lines MCF-10A and H184A1. Detected in invasive ductal carcinoma, but not in the adjacent tissues.

The protein resides in the cytoplasm. It is found in the perinuclear region. It carries out the reaction thiosulfate + glutathione = S-sulfanylglutathione + sulfite + H(+). The catalysed reaction is thiosulfate + 2 glutathione = glutathione disulfide + hydrogen sulfide + sulfite + 2 H(+). GSS(-) is a potent inhibitor of TSTD1, since the presence of the sulfur dioxygenase (SDO) strongly increases the TSTD1 catalytic activity. Thiosulfate:glutathione sulfurtransferase (TST) required to produce S-sulfanylglutathione (GSS(-)), a central intermediate in hydrogen sulfide metabolism. Provides the link between the first step in mammalian H(2)S metabolism performed by the sulfide:quinone oxidoreductase (SQOR) which catalyzes the conversion of H(2)S to thiosulfate, and the sulfur dioxygenase (SDO) which uses GSS(-) as substrate. The thermodynamic coupling of the irreversible SDO and reversible TST reactions provides a model for the physiologically relevant reaction with thiosulfate as the sulfane donor. GSS(-) spontaneously reacts with glutathione to form glutathione disulfide. This Homo sapiens (Human) protein is Thiosulfate:glutathione sulfurtransferase (TSTD1).